We begin with the raw amino-acid sequence, 1007 residues long: Serine/threonine-protein kinase PRP4 homolog (1007 aa).

Residues Met1–Asp102 form a disordered region. Ala2 carries the N-acetylalanine modification. 4 positions are modified to phosphoserine: Ser8, Ser21, Ser24, and Ser33. 2 stretches are compositionally biased toward basic residues: residues Lys40–His60 and Lys68–Lys82. Residues Glu83–Gly92 are compositionally biased toward basic and acidic residues. Phosphoserine occurs at positions 88 and 94. An N6-acetyllysine; alternate modification is found at Lys100. Residue Lys100 forms a Glycyl lysine isopeptide (Lys-Gly) (interchain with G-Cter in SUMO2); alternate linkage. Residue Lys112 forms a Glycyl lysine isopeptide (Lys-Gly) (interchain with G-Cter in SUMO2) linkage. A Glycyl lysine isopeptide (Lys-Gly) (interchain with G-Cter in SUMO2); alternate cross-link involves residue Lys118. Residue Lys118 forms a Glycyl lysine isopeptide (Lys-Gly) (interchain with G-Cter in SUMO1); alternate linkage. Ser132 carries the post-translational modification Phosphoserine. Tyr141 is modified (phosphotyrosine). Disordered regions lie at residues Tyr141–Glu535 and Asn560–Asp583. Ser143, Ser145, and Ser167 each carry phosphoserine. Over residues Gly158–Arg169 the composition is skewed to low complexity. Residues Lys171 and Lys178 each participate in a glycyl lysine isopeptide (Lys-Gly) (interchain with G-Cter in SUMO2) cross-link. 2 stretches are compositionally biased toward basic residues: residues Ser180–Lys203 and Arg215–Ser231. A phosphoserine mark is found at Ser240, Ser242, Ser258, Ser278, Ser292, and Ser294. Residues Arg248–Lys271 show a composition bias toward basic and acidic residues. Residues Ser294–Lys303 show a composition bias toward basic and acidic residues. Over residues Asp304 to Lys315 the composition is skewed to basic residues. A compositionally biased stretch (basic and acidic residues) spans Arg316 to Pro325. Ser328, Ser354, Ser356, Ser366, and Ser368 each carry phosphoserine. Over residues Pro342–Arg367 the composition is skewed to basic residues. Phosphothreonine is present on Thr385. Position 387 is a phosphoserine (Ser387). Basic and acidic residues-rich tracts occupy residues Arg395 to Arg408 and Arg415 to Asp429. Ser427, Ser431, and Ser437 each carry phosphoserine. Positions Pro438 to Ser497 are enriched in basic residues. Residues Ser518, Ser519, Ser520, Ser565, Ser569, Ser576, Ser578, and Ser580 each carry the phosphoserine modification. Acidic residues predominate over residues Ser518 to Glu535. The span at Ser562–Pro581 shows a compositional bias: low complexity. Residues Lys593 and Lys659 each participate in a glycyl lysine isopeptide (Lys-Gly) (interchain with G-Cter in SUMO2) cross-link. The Protein kinase domain occupies Tyr687–Lys1006. ATP-binding positions include Thr693–Val701 and Lys717. Lys717 bears the N6-acetyllysine mark. Asp815 acts as the Proton acceptor in catalysis. Tyr849 carries the phosphotyrosine modification. At Ser852 the chain carries Phosphoserine.

This sequence belongs to the protein kinase superfamily. CMGC Ser/Thr protein kinase family. As to quaternary structure, interacts with CLK1 C-terminus. Associates with the U5 snRNP and NCOR1 deacetylase complexes. Identified in the spliceosome C complex. Phosphorylated by CLK1. Autophosphorylated; phosphorylation inhibits interaction with its targets, such as PRPF6 or SMARCA4.

Its subcellular location is the nucleus. It localises to the chromosome. The protein localises to the centromere. It is found in the kinetochore. The enzyme catalyses L-seryl-[protein] + ATP = O-phospho-L-seryl-[protein] + ADP + H(+). The catalysed reaction is L-threonyl-[protein] + ATP = O-phospho-L-threonyl-[protein] + ADP + H(+). Its function is as follows. Serine/threonine kinase involved in spliceosomal assembly as well as mitosis and signaling regulation. Connects chromatin mediated regulation of transcription and pre-mRNA splicing. During spliceosomal assembly, interacts with and phosphorylates PRPF6 and PRPF31, components of the U4/U6-U5 tri-small nuclear ribonucleoprotein (snRNP), to facilitate the formation of the spliceosome B complex. Plays a role in regulating transcription and the spindle assembly checkpoint (SAC). Associates with U5 snRNP and NCOR1 deacetylase complexes which may allow a coordination of pre-mRNA splicing with chromatin remodeling events involved in transcriptional regulation. Associates and probably phosphorylates SMARCA4 and NCOR1. Phosphorylates SRSF1. Associates with kinetochores during mitosis and is necessary for recruitment and maintenance of the checkpoint proteins such as MAD1L1 and MAD12L1 at the kinetochores. Phosphorylates and regulates the activity of the transcription factors such as ELK1 and KLF13. Phosphorylates nuclear YAP1 and WWTR1/TAZ which induces nuclear exclusion and regulates Hippo signaling pathway, involved in tissue growth control. This chain is Serine/threonine-protein kinase PRP4 homolog (Prp4k), found in Mus musculus (Mouse).